The following is a 546-amino-acid chain: Phosphoglucomutase (546 aa).

The Phosphoserine intermediate role is filled by serine 135. Serine 135, aspartate 288, aspartate 290, and aspartate 292 together coordinate Mg(2+).

Belongs to the phosphohexose mutase family. It depends on Mg(2+) as a cofactor.

The catalysed reaction is alpha-D-glucose 1-phosphate = alpha-D-glucose 6-phosphate. It participates in glycolipid metabolism; diglucosyl-diacylglycerol biosynthesis. Its function is as follows. Catalyzes the interconversion between glucose-6-phosphate and alpha-glucose-1-phosphate. This is the first step in the biosynthesis of diglucosyl-diacylglycerol (Glc2-DAG), i.e. a glycolipid found in the membrane, which is also used as a membrane anchor for lipoteichoic acid (LTA). This chain is Phosphoglucomutase (pgcA), found in Staphylococcus epidermidis (strain ATCC 12228 / FDA PCI 1200).